Here is a 542-residue protein sequence, read N- to C-terminus: MPTIVSYKWTLINNLKISDNQLEELLFKLKSEVKPIDADHVEIEVNNDRPDLFFPYGIIRAAKGILGKELGEPKYDIKQSVYSFEVKEVKSRPYAVAGIVKDIKLDDESLRELIQFQEKLHITVGRKRKKVAIGIHDLDKITSTKIYYKPLPLDYKFIPLNQSKLMTIKEVIEQTPQGREYGNISIYDGLSPAIVEENGDVLSIPPIINSDKTRIDEKTRNIFIDVTGTSFEAVSSTLDILVTDLAEMGGKIELLNFISPSKFEFSPLLRRYTVSVSANYISKNLGINLSLNEIEKYLRMARFDTKVLNDVVEVTVPPYRVDILSQIDLVEEIAMTIGYDKLSPKDYTIKATGKLSAETELIRTLRDLSIGAGFSEIFTFILSNDKRLRNEYVSIVNPVTVEYNAVRNSLIPTLLNFLKYNQHAIMPVYVFEIGDVVIKDKRTDTGYKNSLRAVYGIMNSKVNYEDLQSRVHQILMSLDIEPTYKTYLDDMFIPGRGAKIIDTSKSVEIGVIGEINPVLLEELEIEFPVVISEIYLDSLVKR.

A B5 domain is found at 269-344; it reads LRRYTVSVSA…MTIGYDKLSP (76 aa). Asp-322, Asp-328, Glu-331, and Glu-332 together coordinate Mg(2+).

Belongs to the phenylalanyl-tRNA synthetase beta subunit family. Type 2 subfamily. In terms of assembly, tetramer of two alpha and two beta subunits. The cofactor is Mg(2+).

The protein resides in the cytoplasm. It catalyses the reaction tRNA(Phe) + L-phenylalanine + ATP = L-phenylalanyl-tRNA(Phe) + AMP + diphosphate + H(+). The polypeptide is Phenylalanine--tRNA ligase beta subunit (Sulfolobus acidocaldarius (strain ATCC 33909 / DSM 639 / JCM 8929 / NBRC 15157 / NCIMB 11770)).